The following is a 208-amino-acid chain: Small ribosomal subunit protein uS4 (208 aa).

The interval 31 to 51 (SALDKRAYGPGQHGQRRAKTS) is disordered. The 59-residue stretch at 98 to 156 (RRLDNVVYRMGFATTRSSARQLVTHGHVLVDGKRLDIPSYFVRSGQKIEIKEKTKSNPQ) folds into the S4 RNA-binding domain.

The protein belongs to the universal ribosomal protein uS4 family. In terms of assembly, part of the 30S ribosomal subunit. Contacts protein S5. The interaction surface between S4 and S5 is involved in control of translational fidelity.

Functionally, one of the primary rRNA binding proteins, it binds directly to 16S rRNA where it nucleates assembly of the body of the 30S subunit. With S5 and S12 plays an important role in translational accuracy. The sequence is that of Small ribosomal subunit protein uS4 from Helicobacter pylori (strain HPAG1).